The primary structure comprises 152 residues: Superoxide dismutase [Cu-Zn] (152 aa).

The S-palmitoyl cysteine moiety is linked to residue C7. Cu cation-binding residues include H47, H49, and H64. A disulfide bridge connects residues C58 and C146. The Zn(2+) site is built by H64, H72, H81, and D84. H120 contacts Cu cation.

This sequence belongs to the Cu-Zn superoxide dismutase family. In terms of assembly, homodimer. Cu cation serves as cofactor. The cofactor is Zn(2+).

Its subcellular location is the cytoplasm. The protein localises to the nucleus. The catalysed reaction is 2 superoxide + 2 H(+) = H2O2 + O2. In terms of biological role, destroys radicals which are normally produced within the cells and which are toxic to biological systems. The protein is Superoxide dismutase [Cu-Zn] (sod1) of Xiphias gladius (Swordfish).